A 60-amino-acid polypeptide reads, in one-letter code: Large ribosomal subunit protein bL32 (60 aa).

It belongs to the bacterial ribosomal protein bL32 family.

This chain is Large ribosomal subunit protein bL32, found in Streptococcus pneumoniae serotype 19F (strain G54).